The following is a 310-amino-acid chain: UDP-N-acetylenolpyruvoylglucosamine reductase (310 aa).

The region spanning 34 to 211 (TGGPAQCVYV…REDMGKIAQE (178 aa)) is the FAD-binding PCMH-type domain. Arg177 is an active-site residue. Residue Ser225 is the Proton donor of the active site. The active site involves Glu295.

The protein belongs to the MurB family. FAD is required as a cofactor.

It localises to the cytoplasm. The catalysed reaction is UDP-N-acetyl-alpha-D-muramate + NADP(+) = UDP-N-acetyl-3-O-(1-carboxyvinyl)-alpha-D-glucosamine + NADPH + H(+). It functions in the pathway cell wall biogenesis; peptidoglycan biosynthesis. Functionally, cell wall formation. This chain is UDP-N-acetylenolpyruvoylglucosamine reductase, found in Beijerinckia indica subsp. indica (strain ATCC 9039 / DSM 1715 / NCIMB 8712).